A 269-amino-acid polypeptide reads, in one-letter code: Phycobilisome 37.5 kDa linker polypeptide, phycocyanin-associated, rod (269 aa).

Residues 2–177 enclose the PBS-linker domain; it reads TSSTAARQLG…IYRGYANSDR (176 aa). Residues 217 to 269 enclose the CpcD-like domain; sequence GQLYRVRVIQADRGRTTQIRRSIQEYLVSYDQLSPTLQRLNQRGSRVVNISPA.

The protein belongs to the phycobilisome linker protein family.

The protein localises to the cellular thylakoid membrane. Its function is as follows. Rod linker protein, associated with phycocyanin. Linker polypeptides determine the state of aggregation and the location of the disk-shaped phycobiliprotein units within the phycobilisome and modulate their spectroscopic properties in order to mediate a directed and optimal energy transfer. This Microchaete diplosiphon (Fremyella diplosiphon) protein is Phycobilisome 37.5 kDa linker polypeptide, phycocyanin-associated, rod (cpcH2).